A 608-amino-acid polypeptide reads, in one-letter code: Glutamine--fructose-6-phosphate aminotransferase [isomerizing] (608 aa).

Cysteine 2 serves as the catalytic Nucleophile; for GATase activity. Positions 2–217 (CGIVGYIGDK…DHEIAIIKKD (216 aa)) constitute a Glutamine amidotransferase type-2 domain. SIS domains lie at 285–424 (TKED…KKGT) and 453–598 (VIQK…VDKP). Residue lysine 603 is the For Fru-6P isomerization activity of the active site.

Homodimer.

It localises to the cytoplasm. The catalysed reaction is D-fructose 6-phosphate + L-glutamine = D-glucosamine 6-phosphate + L-glutamate. Catalyzes the first step in hexosamine metabolism, converting fructose-6P into glucosamine-6P using glutamine as a nitrogen source. In Caldanaerobacter subterraneus subsp. tengcongensis (strain DSM 15242 / JCM 11007 / NBRC 100824 / MB4) (Thermoanaerobacter tengcongensis), this protein is Glutamine--fructose-6-phosphate aminotransferase [isomerizing].